Reading from the N-terminus, the 261-residue chain is Cytochrome c oxidase subunit 3 (261 aa).

Over 1–15 (MTHQTHAYHMVNPSP) the chain is Mitochondrial matrix. Residues 16-34 (WPLTGALSALLMTSGLVMW) form a helical membrane-spanning segment. Over 35-40 (FHYNST) the chain is Mitochondrial intermembrane. Residues 41 to 66 (LLLTLGLTTNLLTMYQWWRDIIREST) form a helical membrane-spanning segment. Residues 67-72 (FQGHHT) are Mitochondrial matrix-facing. The chain crosses the membrane as a helical span at residues 73–105 (PAVQKGLRYGMILFIISEVFFFSGFFWAFYHSS). At 106–128 (LAPTPELGGCWPPTGIHPLNPME) the chain is on the mitochondrial intermembrane side. Residues 129–152 (VPLLNTSVLLASGVSITWAHHSLM) traverse the membrane as a helical segment. Residues 153 to 155 (EGN) are Mitochondrial matrix-facing. A helical transmembrane segment spans residues 156–183 (RKHMLQALFITISLGIYFTLLQASEYYE). At 184 to 190 (APFTISD) the chain is on the mitochondrial intermembrane side. A helical transmembrane segment spans residues 191–223 (GVYGSTFFVATGFHGLHVIIGSTFLIVCFLRQL). Residues 224–232 (KFHFTSNHH) lie on the Mitochondrial matrix side of the membrane. The helical transmembrane segment at 233-256 (FGFEAAAWYWHFVDVVWLFLYVSI) threads the bilayer. Residues 257–261 (YWWGS) are Mitochondrial intermembrane-facing.

Belongs to the cytochrome c oxidase subunit 3 family. As to quaternary structure, component of the cytochrome c oxidase (complex IV, CIV), a multisubunit enzyme composed of 14 subunits. The complex is composed of a catalytic core of 3 subunits MT-CO1, MT-CO2 and MT-CO3, encoded in the mitochondrial DNA, and 11 supernumerary subunits COX4I, COX5A, COX5B, COX6A, COX6B, COX6C, COX7A, COX7B, COX7C, COX8 and NDUFA4, which are encoded in the nuclear genome. The complex exists as a monomer or a dimer and forms supercomplexes (SCs) in the inner mitochondrial membrane with NADH-ubiquinone oxidoreductase (complex I, CI) and ubiquinol-cytochrome c oxidoreductase (cytochrome b-c1 complex, complex III, CIII), resulting in different assemblies (supercomplex SCI(1)III(2)IV(1) and megacomplex MCI(2)III(2)IV(2)).

The protein localises to the mitochondrion inner membrane. The enzyme catalyses 4 Fe(II)-[cytochrome c] + O2 + 8 H(+)(in) = 4 Fe(III)-[cytochrome c] + 2 H2O + 4 H(+)(out). In terms of biological role, component of the cytochrome c oxidase, the last enzyme in the mitochondrial electron transport chain which drives oxidative phosphorylation. The respiratory chain contains 3 multisubunit complexes succinate dehydrogenase (complex II, CII), ubiquinol-cytochrome c oxidoreductase (cytochrome b-c1 complex, complex III, CIII) and cytochrome c oxidase (complex IV, CIV), that cooperate to transfer electrons derived from NADH and succinate to molecular oxygen, creating an electrochemical gradient over the inner membrane that drives transmembrane transport and the ATP synthase. Cytochrome c oxidase is the component of the respiratory chain that catalyzes the reduction of oxygen to water. Electrons originating from reduced cytochrome c in the intermembrane space (IMS) are transferred via the dinuclear copper A center (CU(A)) of subunit 2 and heme A of subunit 1 to the active site in subunit 1, a binuclear center (BNC) formed by heme A3 and copper B (CU(B)). The BNC reduces molecular oxygen to 2 water molecules using 4 electrons from cytochrome c in the IMS and 4 protons from the mitochondrial matrix. This is Cytochrome c oxidase subunit 3 (MT-CO3) from Rhinoceros unicornis (Greater Indian rhinoceros).